Reading from the N-terminus, the 321-residue chain is Chlorohydroquinone/hydroquinone 1,2-dioxygenase (321 aa).

VOC domains are found at residues 10–138 (GLHH…IIEQ) and 160–282 (GFHS…ASVT). The Fe cation site is built by His-162, His-229, and Glu-278.

It belongs to the extradiol ring-cleavage dioxygenase family. The cofactor is Fe(2+).

The catalysed reaction is hydroquinone + O2 = (2E,4Z)-4-hydroxy-6-oxohexa-2,4-dienoate + H(+). The enzyme catalyses chlorohydroquinone + O2 = 5-chlorocarbonyl-4-hydroxy-penta-2,4-dienoate + H(+). It functions in the pathway xenobiotic degradation; gamma-hexachlorocyclohexane degradation. Cleaves aromatic rings with two hydroxyl groups at para positions with consumption of O(2). Catalyzes the cleavage of chlorohydroquinone (CHQ), as part of the gamma-hexachlorocyclohexane (gamma-HCH or lindane) degradation pathway, producing 5-chlorocarbonyl-4-hydroxy-penta-2,4-dienoate as an intermediate product that can react with water yielding maleylacetate. This degradation pathway allows S.japonicum UT26 to grow on gamma-HCH as the sole source of carbon and energy. Can also use hydroquinone (HQ) as substrate, leading to gamma-hydroxymuconic semialdehyde. Is not able to convert catechol, contrary to meta-cleavage dioxygenases. This chain is Chlorohydroquinone/hydroquinone 1,2-dioxygenase, found in Sphingobium indicum (strain DSM 16413 / CCM 7287 / MTCC 6362 / UT26 / NBRC 101211 / UT26S) (Sphingobium japonicum).